A 334-amino-acid polypeptide reads, in one-letter code: GTPase Obg (334 aa).

Residues 1–159 (MRFVDEVVIK…KEVRLELNLL (159 aa)) form the Obg domain. Residues 160–331 (ADVALLGLPN…LAKKLNEFLQ (172 aa)) enclose the OBG-type G domain. GTP contacts are provided by residues 166–173 (GLPNAGKS), 191–195 (FTTMY), 212–215 (DIPG), 282–285 (NKID), and 312–314 (SAA). Residues Ser173 and Thr193 each coordinate Mg(2+).

This sequence belongs to the TRAFAC class OBG-HflX-like GTPase superfamily. OBG GTPase family. In terms of assembly, monomer. It depends on Mg(2+) as a cofactor.

The protein localises to the cytoplasm. Its function is as follows. An essential GTPase which binds GTP, GDP and possibly (p)ppGpp with moderate affinity, with high nucleotide exchange rates and a fairly low GTP hydrolysis rate. Plays a role in control of the cell cycle, stress response, ribosome biogenesis and in those bacteria that undergo differentiation, in morphogenesis control. This is GTPase Obg from Francisella tularensis subsp. tularensis (strain FSC 198).